Consider the following 114-residue polypeptide: Nucleoid-associated protein SGR_3378 (114 aa).

It belongs to the YbaB/EbfC family. In terms of assembly, homodimer.

It is found in the cytoplasm. The protein localises to the nucleoid. Its function is as follows. Binds to DNA and alters its conformation. May be involved in regulation of gene expression, nucleoid organization and DNA protection. In Streptomyces griseus subsp. griseus (strain JCM 4626 / CBS 651.72 / NBRC 13350 / KCC S-0626 / ISP 5235), this protein is Nucleoid-associated protein SGR_3378.